Reading from the N-terminus, the 468-residue chain is Proline--tRNA ligase (468 aa).

Belongs to the class-II aminoacyl-tRNA synthetase family. ProS type 3 subfamily. As to quaternary structure, homodimer.

It is found in the cytoplasm. The enzyme catalyses tRNA(Pro) + L-proline + ATP = L-prolyl-tRNA(Pro) + AMP + diphosphate. Functionally, catalyzes the attachment of proline to tRNA(Pro) in a two-step reaction: proline is first activated by ATP to form Pro-AMP and then transferred to the acceptor end of tRNA(Pro). The sequence is that of Proline--tRNA ligase from Frankia alni (strain DSM 45986 / CECT 9034 / ACN14a).